The primary structure comprises 181 residues: Iron sulfur cluster assembly protein 1, mitochondrial (181 aa).

The tract at residues arginine 159–alanine 181 is disordered. The span at alanine 168–alanine 181 shows a compositional bias: low complexity.

It belongs to the NifU family. Component of the core Fe-S cluster (ISC) assembly machinery. It depends on [2Fe-2S] cluster as a cofactor.

Its subcellular location is the mitochondrion matrix. Its pathway is cofactor biosynthesis; iron-sulfur cluster biosynthesis. Functionally, scaffold protein for the de novo synthesis of iron-sulfur (Fe-S) clusters within mitochondria, which is required for maturation of both mitochondrial and cytoplasmic [2Fe-2S] and [4Fe-4S] proteins. First, a [2Fe-2S] cluster is transiently assembled on the scaffold protein ISU1. In a second step, the cluster is released from ISU1, transferred to a glutaredoxin, followed by the formation of mitochondrial [2Fe-2S] proteins, the synthesis of [4Fe-4S] clusters and their target-specific insertion into the recipient apoproteins. Cluster assembly on ISU1 depends on the function of the cysteine desulfurase complex NFS1-ISD11, which serves as the sulfur donor for cluster synthesis, the iron-binding protein frataxin as the putative iron donor, and the electron transfer chain comprised of ferredoxin reductase and ferredoxin, which receive their electrons from NADH. The sequence is that of Iron sulfur cluster assembly protein 1, mitochondrial (ISU1) from Yarrowia lipolytica (strain CLIB 122 / E 150) (Yeast).